We begin with the raw amino-acid sequence, 98 residues long: Large ribosomal subunit protein uL23c (98 aa).

This sequence belongs to the universal ribosomal protein uL23 family. As to quaternary structure, part of the 50S ribosomal subunit.

The protein resides in the plastid. It is found in the chloroplast. Functionally, binds to 23S rRNA. The sequence is that of Large ribosomal subunit protein uL23c (rpl23) from Thalassiosira pseudonana (Marine diatom).